The primary structure comprises 490 residues: Phosphoethanolamine N-methyltransferase 3 (490 aa).

S-adenosyl-L-homocysteine contacts are provided by G60, R65, D81, D106, V107, and N125. The phosphocholine site is built by S158, S163, G164, R168, and Y175. Residues 244–245 and Y253 contribute to the N-methylethanolamine phosphate site; that span reads QY. Y253 lines the phosphocholine pocket. S-adenosyl-L-homocysteine is bound by residues V262, S263, G289, D311, D337, C338, and R354. Residues Y385, Y399, R403, Y405, and K471 each contribute to the phosphocholine site. N-methylethanolamine phosphate-binding positions include Y385, Y399, 403–405, and K471; that span reads RGY.

This sequence belongs to the class I-like SAM-binding methyltransferase superfamily. PEAMT family. As to expression, expressed in root vasculature, shoots, rosettes leaves, cauline leaves, sepals, petals, anther filaments and ovules. Highly expressed in leaf vasculature.

It localises to the cytoplasm. It carries out the reaction phosphoethanolamine + S-adenosyl-L-methionine = N-methylethanolamine phosphate + S-adenosyl-L-homocysteine + H(+). The catalysed reaction is N-methylethanolamine phosphate + S-adenosyl-L-methionine = N,N-dimethylethanolamine phosphate + S-adenosyl-L-homocysteine + H(+). The enzyme catalyses N,N-dimethylethanolamine phosphate + S-adenosyl-L-methionine = phosphocholine + S-adenosyl-L-homocysteine + H(+). It participates in phospholipid metabolism; phosphatidylcholine biosynthesis; phosphocholine from phosphoethanolamine: step 1/1. Its function is as follows. Involved in phosphocholine biosynthesis. Catalyzes the N-methylation of phosphoethanolamine, phosphomonomethylethanolamine and phosphodimethylethanolamine, the three methylation steps required to convert phosphoethanolamine to phosphocholine (PC). In association with NMT1, regulates PC homeostasis, phase transition at the shoot apex, coordinated organ development, and fertility. In associtation with NMT1, involved in phosphatidylcholine biosynthesis and vascular development. The protein is Phosphoethanolamine N-methyltransferase 3 of Arabidopsis thaliana (Mouse-ear cress).